The chain runs to 461 residues: V-type ATP synthase beta chain (461 aa).

This sequence belongs to the ATPase alpha/beta chains family.

In terms of biological role, produces ATP from ADP in the presence of a proton gradient across the membrane. The V-type beta chain is a regulatory subunit. The chain is V-type ATP synthase beta chain from Clostridium botulinum (strain Kyoto / Type A2).